Consider the following 394-residue polypeptide: MSKEKFERTKPHVNVGTIGHVDHGKTTLTAAITTVLAKTYGGSARAFDQIDNAPEEKARGITINTSHVEYDTPARHYAHVDCPGHADYVKNMITGAAQMDGAILVVAATDGPMPQTREHILLGRQVGVPFMIVFMNKCDMVDDEELLELVEMEVRELLSQYDFPGDDIPVIRGSALKALEGEAEWEAKIIELAGYLDSYIPEPERAIDKPFLLPIEDVFSISGRGTVVTGRVERGIVKVGEEVEIVGIKDTVKSTCTGVEMFRKLLDEGRAGENVGVLLRGIKREEIERGQVLAKPGSIKPHTQFESEVYILSKDEGGRHTPFFKGYRPQFYFRTTDVTGTIELPEGVEMVMPGDNIKMVVTLIHPIAMDDGLRFAIREGGRTVGAGVVAKVIA.

The tr-type G domain maps to 10–204 (KPHVNVGTIG…YLDSYIPEPE (195 aa)). The segment at 19–26 (GHVDHGKT) is G1. 19 to 26 (GHVDHGKT) lines the GTP pocket. Thr-26 lines the Mg(2+) pocket. Residues 60-64 (GITIN) form a G2 region. Residues 81–84 (DCPG) form a G3 region. GTP is bound by residues 81 to 85 (DCPGH) and 136 to 139 (NKCD). The segment at 136 to 139 (NKCD) is G4. A G5 region spans residues 174 to 176 (SAL).

The protein belongs to the TRAFAC class translation factor GTPase superfamily. Classic translation factor GTPase family. EF-Tu/EF-1A subfamily. In terms of assembly, monomer.

It is found in the cytoplasm. It carries out the reaction GTP + H2O = GDP + phosphate + H(+). Functionally, GTP hydrolase that promotes the GTP-dependent binding of aminoacyl-tRNA to the A-site of ribosomes during protein biosynthesis. This Pectobacterium atrosepticum (strain SCRI 1043 / ATCC BAA-672) (Erwinia carotovora subsp. atroseptica) protein is Elongation factor Tu.